A 373-amino-acid polypeptide reads, in one-letter code: Anhydro-N-acetylmuramic acid kinase (373 aa).

12–19 (GTSLDGVD) serves as a coordination point for ATP.

The protein belongs to the anhydro-N-acetylmuramic acid kinase family.

It catalyses the reaction 1,6-anhydro-N-acetyl-beta-muramate + ATP + H2O = N-acetyl-D-muramate 6-phosphate + ADP + H(+). It functions in the pathway amino-sugar metabolism; 1,6-anhydro-N-acetylmuramate degradation. The protein operates within cell wall biogenesis; peptidoglycan recycling. Its function is as follows. Catalyzes the specific phosphorylation of 1,6-anhydro-N-acetylmuramic acid (anhMurNAc) with the simultaneous cleavage of the 1,6-anhydro ring, generating MurNAc-6-P. Is required for the utilization of anhMurNAc either imported from the medium or derived from its own cell wall murein, and thus plays a role in cell wall recycling. The polypeptide is Anhydro-N-acetylmuramic acid kinase (Salmonella agona (strain SL483)).